Here is a 219-residue protein sequence, read N- to C-terminus: Guanylate kinase (219 aa).

A Guanylate kinase-like domain is found at 15–194 (GLMLVISSPS…AFSSVRAIVE (180 aa)). Residue 22–29 (SPSGAGKS) participates in ATP binding.

The protein belongs to the guanylate kinase family.

It localises to the cytoplasm. The catalysed reaction is GMP + ATP = GDP + ADP. Essential for recycling GMP and indirectly, cGMP. The chain is Guanylate kinase from Rhizobium meliloti (strain 1021) (Ensifer meliloti).